A 390-amino-acid polypeptide reads, in one-letter code: Chorismate synthase 2 (390 aa).

Residues R39 and R45 each coordinate NADP(+). FMN contacts are provided by residues 132–134 (RSS), 253–254 (NA), G298, 313–317 (KPIPT), and R339.

Belongs to the chorismate synthase family. Homotetramer. FMNH2 is required as a cofactor.

The enzyme catalyses 5-O-(1-carboxyvinyl)-3-phosphoshikimate = chorismate + phosphate. The protein operates within metabolic intermediate biosynthesis; chorismate biosynthesis; chorismate from D-erythrose 4-phosphate and phosphoenolpyruvate: step 7/7. In terms of biological role, catalyzes the anti-1,4-elimination of the C-3 phosphate and the C-6 proR hydrogen from 5-enolpyruvylshikimate-3-phosphate (EPSP) to yield chorismate, which is the branch point compound that serves as the starting substrate for the three terminal pathways of aromatic amino acid biosynthesis. This reaction introduces a second double bond into the aromatic ring system. This Bacillus cereus (strain ZK / E33L) protein is Chorismate synthase 2.